The sequence spans 197 residues: Small ribosomal subunit protein uS5 (197 aa).

Residues 1 to 27 form a disordered region; the sequence is MAEREQRGGRDQRGGGRERKEREERDS. Residues 29–92 form the S5 DRBM domain; the sequence is FVDKLVHINR…ESAKRNLTRV (64 aa).

Belongs to the universal ribosomal protein uS5 family. In terms of assembly, part of the 30S ribosomal subunit. Contacts proteins S4 and S8.

Functionally, with S4 and S12 plays an important role in translational accuracy. Its function is as follows. Located at the back of the 30S subunit body where it stabilizes the conformation of the head with respect to the body. The polypeptide is Small ribosomal subunit protein uS5 (Bradyrhizobium diazoefficiens (strain JCM 10833 / BCRC 13528 / IAM 13628 / NBRC 14792 / USDA 110)).